A 715-amino-acid chain; its full sequence is Methionine--tRNA ligase (715 aa).

Positions 20-30 (PYANGKAHIGH) match the 'HIGH' region motif. The Zn(2+) site is built by Cys-151, Cys-154, Cys-163, and Cys-167. A 'KMSKS' region motif is present at residues 334-338 (KFSKT). An ATP-binding site is contributed by Lys-337. The segment at 559–593 (ANAKRNGVKGGEKEPSKSEGMGPSEASKASEKTVD) is disordered. One can recognise a tRNA-binding domain in the interval 613-715 (DFAKLDIRVG…KEIKSGSRIR (103 aa)).

The protein belongs to the class-I aminoacyl-tRNA synthetase family. MetG type 1 subfamily. As to quaternary structure, homodimer. The cofactor is Zn(2+).

Its subcellular location is the cytoplasm. It catalyses the reaction tRNA(Met) + L-methionine + ATP = L-methionyl-tRNA(Met) + AMP + diphosphate. In terms of biological role, is required not only for elongation of protein synthesis but also for the initiation of all mRNA translation through initiator tRNA(fMet) aminoacylation. This chain is Methionine--tRNA ligase, found in Methanosarcina mazei (strain ATCC BAA-159 / DSM 3647 / Goe1 / Go1 / JCM 11833 / OCM 88) (Methanosarcina frisia).